The chain runs to 88 residues: Exodeoxyribonuclease 7 small subunit (88 aa).

The segment at 69-88 (DPMRPDDGEPFDPSIVSTSQ) is disordered.

This sequence belongs to the XseB family. In terms of assembly, heterooligomer composed of large and small subunits.

The protein localises to the cytoplasm. It catalyses the reaction Exonucleolytic cleavage in either 5'- to 3'- or 3'- to 5'-direction to yield nucleoside 5'-phosphates.. Functionally, bidirectionally degrades single-stranded DNA into large acid-insoluble oligonucleotides, which are then degraded further into small acid-soluble oligonucleotides. This chain is Exodeoxyribonuclease 7 small subunit, found in Xylella fastidiosa (strain M12).